Reading from the N-terminus, the 125-residue chain is uncharacterized protein (125 aa).

The next 4 helical transmembrane spans lie at 9-29 (IANAGALAVAVWLLDKITLTG), 33-53 (GEKTLTLIVVALVFGLVNMVV), 56-76 (IVQVLTFPLFILTLGLFTLVV), and 100-120 (FWTAVLGGLIVSIVSWALNAF).

It localises to the cell membrane. This is an uncharacterized protein from Streptomyces coelicolor (strain ATCC BAA-471 / A3(2) / M145).